The sequence spans 3122 residues: Large tegument protein deneddylase (3122 aa).

Residues 1–248 (MIPAALPHPT…SETYLQDEPF (248 aa)) form a deubiquitination activity region. The Peptidase C76 domain maps to 20 to 238 (VVTGVRNQFA…TAAALHLYGA (219 aa)). Catalysis depends on residues C40, D172, and H174. Disordered regions lie at residues 281-367 (GSGP…GDAA) and 387-496 (RARY…PPGA). Residues 343–353 (SAPDAAASGPP) are compositionally biased toward low complexity. 2 stretches are compositionally biased toward basic residues: residues 387-400 (RARY…RRRP) and 425-436 (KAKKKSAPKKKA). Positions 437-454 (PVAAEVPASSPTPIAATV) are enriched in low complexity. The segment at 548–578 (LELCVIFFFERVLAFLIENGARTHTQAGVAG) is interaction with inner tegument protein. Disordered stretches follow at residues 2494–2539 (YQRP…ADPG), 2570–2974 (ASDD…THLP), and 3006–3059 (SDDE…SQFG). Composition is skewed to pro residues over residues 2578 to 2590 (TPNP…PPPA) and 2637 to 2654 (PSPP…PPPA). Residues 2655 to 2667 (FSGSAAAFSAAVP) show a composition bias toward low complexity. Residues 2668 to 2681 (RVRRSRRTRAKSRA) show a composition bias toward basic residues. Composition is skewed to pro residues over residues 2690–2700 (GWRPPALPAPV) and 2710–2719 (PDQPPTPESA). A compositionally biased stretch (low complexity) spans 2734–2743 (ASARGAFPAP). Composition is skewed to pro residues over residues 2744–2753 (TLAPIPPPPA) and 2775–2785 (SPTPPRGPAAG). Composition is skewed to low complexity over residues 2786–2807 (PPRR…SLPS) and 2814–2825 (HAAAVSAAAAAV). Residues 2841-2852 (SPPPLAPGPVAP) are compositionally biased toward pro residues. Low complexity predominate over residues 2853-2867 (SEPLCGWVVPGGPVA). Repeat copies occupy residues 2891–2895 (PQPPL), 2896–2900 (PQPPL), 2901–2905 (PQPPL), 2906–2910 (PQPPL), 2911–2915 (PQPPL), 2916–2920 (PQPPL), 2921–2925 (PQPPL), 2926–2930 (PQPPL), 2931–2935 (PQPPL), 2936–2940 (PQPPL), and 2941–2945 (PQPPL). The segment at 2891–2945 (PQPPLPQPPLPQPPLPQPPLPQPPLPQPPLPQPPLPQPPLPQPPLPQPPLPQPPL) is 11 X 5 AA tandem repeats of P-Q-P-P-L. Residues 2891–2947 (PQPPLPQPPLPQPPLPQPPLPQPPLPQPPLPQPPLPQPPLPQPPLPQPPLPQPPLPP) are compositionally biased toward pro residues. Composition is skewed to polar residues over residues 2950 to 2959 (RTLTPQSRDS) and 2965 to 2974 (SPTHTNTHLP). Basic and acidic residues predominate over residues 3006–3020 (SDDEHSDADSLRFSD). Residues 3029-3045 (PLPPEPHLPPADEPPGP) show a composition bias toward pro residues.

It belongs to the herpesviridae large tegument protein family. Interacts with host CUL1 and CUL4A; these interactions inhibit the E3 ligase activity of cullins. Interacts with inner tegument protein. Interacts with capsid vertex specific component CVC2. Interacts with the major capsid protein/MCP. Post-translationally, proteolytically processed, possibly into several polypeptides. Enzymatic activity is only detectable following cleavage of the UL36 protein, which occurs late during viral replication.

The protein resides in the virion tegument. The protein localises to the host cytoplasm. Its subcellular location is the host nucleus. The enzyme catalyses Thiol-dependent hydrolysis of ester, thioester, amide, peptide and isopeptide bonds formed by the C-terminal Gly of ubiquitin (a 76-residue protein attached to proteins as an intracellular targeting signal).. Its function is as follows. Large tegument protein that plays multiple roles in the viral cycle. During viral entry, remains associated with the capsid while most of the tegument is detached and participates in the capsid transport toward the host nucleus. Plays a role in the routing of the capsid at the nuclear pore complex and subsequent uncoating. Within the host nucleus, acts as a deneddylase and promotes the degradation of nuclear CRLs (cullin-RING ubiquitin ligases) and thereby stabilizes nuclear CRL substrates, while cytoplasmic CRLs remain unaffected. These modifications prevent host cell cycle S-phase progression and create a favorable environment allowing efficient viral genome replication. Participates later in the secondary envelopment of capsids. Indeed, plays a linker role for the association of the outer viral tegument to the capsids together with the inner tegument protein. The polypeptide is Large tegument protein deneddylase (Human herpesvirus 2 (strain HG52) (HHV-2)).